The following is a 72-amino-acid chain: Large ribosomal subunit protein uL29 (72 aa).

The protein belongs to the universal ribosomal protein uL29 family.

The polypeptide is Large ribosomal subunit protein uL29 (Prochlorococcus marinus (strain MIT 9215)).